The chain runs to 935 residues: Mannosyltransferase regulator 14 (935 aa).

Residues 1-21 (MMLSLRRFSMYVLRSLRLHFK) are Cytoplasmic-facing. Residues 22–42 (KIIITLLTIQLLFITIFVLGG) form a helical; Signal-anchor for type II membrane protein membrane-spanning segment. Residues 43-935 (RSSIIDGNWK…NNIFGSDQKY (893 aa)) lie on the Lumenal side of the membrane. The DXD motif lies at 498-500 (DHD).

It belongs to the MNN4 family.

It localises to the golgi apparatus membrane. Functionally, plays a role in N-glycan mannosylphosphorylation and has partially redundant function with MNN4. The polypeptide is Mannosyltransferase regulator 14 (Saccharomyces cerevisiae (strain ATCC 204508 / S288c) (Baker's yeast)).